We begin with the raw amino-acid sequence, 165 residues long: UPF0303 protein Rleg2_2653 (165 aa).

It belongs to the UPF0303 family.

This is UPF0303 protein Rleg2_2653 from Rhizobium leguminosarum bv. trifolii (strain WSM2304).